The primary structure comprises 52 residues: Mitogenic lectin alpha chain (52 aa).

The protein belongs to the leguminous lectin family. Tetramer of two alpha and two beta chains.

The protein is Mitogenic lectin alpha chain of Vicia sativa (Spring vetch).